The chain runs to 484 residues: F-box/LRR-repeat protein At3g59210 (484 aa).

The F-box domain occupies 6–54 (KDIINCLPDNLLCQILSNLSTKEAALTSLLSKRWRYLFALVPNLDFDVL). LRR repeat units lie at residues 144–170 (KIGP…NLDS), 172–197 (VFEE…SLLN), 205–234 (SCSV…SFDT), 303–334 (TLYL…TIES), and 335–360 (HPEL…VFQG).

The chain is F-box/LRR-repeat protein At3g59210 from Arabidopsis thaliana (Mouse-ear cress).